We begin with the raw amino-acid sequence, 377 residues long: MLRLAAAGARAIVDMSYARHFLDFQGSAIPRTMQKLVVTRLSPNFHEAVTLRRDCPVPLPGDGDLLVRNRFVGINASDINYSAGRYDPSLKPPFDIGFEGIGEVVALGLSASARYTVGQAVAYMAPGSFAEYTVVPASIAIPMPSVKPEYLTMLVSGTTAYLSLEELGELSEGKKVLVTAAAGGTGQFAVQLSKIAKCHVIGTCSSDEKAAFLKSIGCDRPINYRTEPVETVLKQEYPEGVDVVYESVGGAMFDLAVDALATKGRLIVIGFISGYQSPTGLSPIKAGVLPTKLLKKSASLRGFFLNHYFSKYQAAMERLLELYARGDLVCEVDLGHLAPDGRFIGLESVFQAVDYMYTGKNTGKLVVELPHPVSSKL.

Lys35 carries the N6-acetyllysine modification. Residues Thr185, Ser205, Lys209, Tyr224, Ser247, Ile269, and Tyr275 each contribute to the NADP(+) site. Ser299 carries the phosphoserine modification. NADP(+) is bound by residues 303–305 (FFL) and Asn361.

Belongs to the zinc-containing alcohol dehydrogenase family. Quinone oxidoreductase subfamily. Widely expressed.

The protein localises to the peroxisome. It catalyses the reaction 13,14-dihydro-15-oxo-prostaglandin E2 + NADP(+) = 15-oxoprostaglandin E2 + NADPH + H(+). It carries out the reaction 13,14-dihydro-15-oxo-prostaglandin E1 + NADP(+) = 15-oxoprostaglandin E1 + NADPH + H(+). The enzyme catalyses 13,14-dihydro-15-oxo-PGF2alpha + NADP(+) = 15-oxoprostaglandin F2alpha + NADPH + H(+). The catalysed reaction is 13,14-dihydro-15-oxo-prostaglandin F1alpha + NADP(+) = 15-oxoprostaglandin F1alpha + NADPH + H(+). Functions as 15-oxo-prostaglandin 13-reductase and acts on 15-keto-PGE1, 15-keto-PGE2, 15-keto-PGE1-alpha and 15-keto-PGE2-alpha with highest efficiency towards 15-keto-PGE2-alpha. Overexpression represses transcriptional activity of PPARG and inhibits adipocyte differentiation. This is Prostaglandin reductase-3 from Mus musculus (Mouse).